The following is a 341-amino-acid chain: Chitin synthase 3 complex protein CSI2 (341 aa).

Over residues 35-70 the composition is skewed to low complexity; sequence SSSTKAADSSSKGSSSAKTTTSLGKSSVTSKDVSSS. 3 disordered regions span residues 35–78, 272–291, and 298–341; these read SSST…SSTK, DSLS…GKFT, and NYTS…DGKE.

Functionally, appears to be a structural component of the chitin synthase 3 complex. In Saccharomyces cerevisiae (strain ATCC 204508 / S288c) (Baker's yeast), this protein is Chitin synthase 3 complex protein CSI2 (CSI2).